The following is a 209-amino-acid chain: Transcription antitermination protein NusB (209 aa).

The protein belongs to the NusB family.

Involved in transcription antitermination. Required for transcription of ribosomal RNA (rRNA) genes. Binds specifically to the boxA antiterminator sequence of the ribosomal RNA (rrn) operons. In Cyanothece sp. (strain PCC 7425 / ATCC 29141), this protein is Transcription antitermination protein NusB.